A 210-amino-acid chain; its full sequence is N-(5'-phosphoribosyl)anthranilate isomerase (210 aa).

This sequence belongs to the TrpF family.

The enzyme catalyses N-(5-phospho-beta-D-ribosyl)anthranilate = 1-(2-carboxyphenylamino)-1-deoxy-D-ribulose 5-phosphate. Its pathway is amino-acid biosynthesis; L-tryptophan biosynthesis; L-tryptophan from chorismate: step 3/5. The chain is N-(5'-phosphoribosyl)anthranilate isomerase from Pseudomonas fluorescens (strain ATCC BAA-477 / NRRL B-23932 / Pf-5).